A 383-amino-acid chain; its full sequence is Transcription termination factor Rho (383 aa).

The disordered stretch occupies residues 1–22 (MTIETTTKKRPRAARPPRPRES). Residues 8–17 (KKRPRAARPP) show a composition bias toward basic residues. Positions 26–93 (LETVAGLLDV…AEVESVNGST (68 aa)) constitute a Rho RNA-BD domain. ATP is bound by residues 132–137 (GKGQRG), 144–149 (KAGKTM), and Arg-175.

Belongs to the Rho family. In terms of assembly, homohexamer. The homohexamer assembles into an open ring structure.

Its function is as follows. Facilitates transcription termination by a mechanism that involves Rho binding to the nascent RNA, activation of Rho's RNA-dependent ATPase activity, and release of the mRNA from the DNA template. This is Transcription termination factor Rho from Streptosporangium roseum (strain ATCC 12428 / DSM 43021 / JCM 3005 / KCTC 9067 / NCIMB 10171 / NRRL 2505 / NI 9100).